The primary structure comprises 265 residues: Mlc titration factor A (265 aa).

Zn(2+) contacts are provided by histidine 111, histidine 148, histidine 152, and glutamate 211.

Belongs to the MtfA family. As to quaternary structure, interacts with Mlc. It depends on Zn(2+) as a cofactor.

Its subcellular location is the cytoplasm. Functionally, involved in the modulation of the activity of the glucose-phosphotransferase system (glucose-PTS). Interacts with the transcriptional repressor Mlc, preventing its interaction with DNA and leading to the modulation of expression of genes regulated by Mlc, including ptsG, which encodes the PTS system glucose-specific EIICB component. Shows zinc-dependent metallopeptidase activity. This chain is Mlc titration factor A, found in Escherichia coli O8 (strain IAI1).